The sequence spans 290 residues: Ribosome-inactivating protein bryodin I (290 aa).

The signal sequence occupies residues 1–23 (MIKLLVLWLLILTIFLKSPTVEG). Residues glutamate 183 and glutamate 212 contribute to the active site. Residues asparagine 214 and asparagine 250 are each glycosylated (N-linked (GlcNAc...) asparagine). The propeptide at 271–290 (AIGEDISMTLIGFEHGLYGI) is removed in mature form.

Belongs to the ribosome-inactivating protein family. Type 1 RIP subfamily. Post-translationally, appears to undergo proteolytic cleavage in the C-terminal to produce a shorter protein.

The catalysed reaction is Endohydrolysis of the N-glycosidic bond at one specific adenosine on the 28S rRNA.. Its function is as follows. Ribosome-inactivating protein of type 1, inhibits protein synthesis in animal cells. The sequence is that of Ribosome-inactivating protein bryodin I from Bryonia dioica (Red bryony).